The primary structure comprises 313 residues: MSQEFSHLSVLLTETVAGLNIKPDGIYIDGTFGRGGHSREVLKHLGDNGRLIAIDRDPQAIIAAEQFADDARFSIVHGGFGQLADYVEDLGLKGKVDGVLLDFGVSSPQLDDAERGFSFLRDGPLDMRMDNSQGQTAAEWIARTEIEDMAWVFKTYGEEKNSRHIARCIAADRDKTPFLRTKELADLIARICKSKERNKHPATRVFQAIRIYINSELEQIDQALEGALKVLAPQGRLSVISFHSLEDRIVKRFIRRHSQGMSVPHGLPITEAEINKTRLLKAVGKATKPSTEEVEMNKRSRSSVLRVAERLEY.

S-adenosyl-L-methionine is bound by residues 35–37 (GGH), Asp55, Phe80, Asp102, and Gln109.

The protein belongs to the methyltransferase superfamily. RsmH family.

It localises to the cytoplasm. The catalysed reaction is cytidine(1402) in 16S rRNA + S-adenosyl-L-methionine = N(4)-methylcytidine(1402) in 16S rRNA + S-adenosyl-L-homocysteine + H(+). Functionally, specifically methylates the N4 position of cytidine in position 1402 (C1402) of 16S rRNA. The chain is Ribosomal RNA small subunit methyltransferase H from Shewanella violacea (strain JCM 10179 / CIP 106290 / LMG 19151 / DSS12).